Consider the following 269-residue polypeptide: GTP cyclohydrolase FolE2 (269 aa).

This sequence belongs to the GTP cyclohydrolase IV family.

The catalysed reaction is GTP + H2O = 7,8-dihydroneopterin 3'-triphosphate + formate + H(+). It functions in the pathway cofactor biosynthesis; 7,8-dihydroneopterin triphosphate biosynthesis; 7,8-dihydroneopterin triphosphate from GTP: step 1/1. Functionally, converts GTP to 7,8-dihydroneopterin triphosphate. The polypeptide is GTP cyclohydrolase FolE2 (Burkholderia ambifaria (strain ATCC BAA-244 / DSM 16087 / CCUG 44356 / LMG 19182 / AMMD) (Burkholderia cepacia (strain AMMD))).